Reading from the N-terminus, the 267-residue chain is X-box-binding protein 1 (267 aa).

At 1–180 (MVVVAAAPSA…VQAQLSPPQN (180 aa)) the chain is on the cytoplasmic side. Residues 35-56 (VPGPRAAGSEASGTPQARKRQR) are disordered. A Phosphoserine modification is found at serine 61. A bZIP domain is found at 63-126 (EEKALRRKLK…HGLVVENQEL (64 aa)). A basic motif region spans residues 65–87 (KALRRKLKNRVAAQTARDRKKAR). Residues 69 to 85 (RKLKNRVAAQTARDRKK) form a nuclear localization signal (NLS) region. The interval 91-126 (LEQQVVDLEEENHKLQLENQLLREKTHGLVVENQEL) is leucine-zipper. A helical; Signal-anchor for type II membrane protein transmembrane segment spans residues 181–198 (IFPWTLTLLPLQILSLIS). Over 199–267 (FWAFWTSWTL…FVLTMYTPSL (69 aa)) the chain is Lumenal. The interval 230 to 256 (QKDLVPYQPPFLCQWGPHQPSWKPLMN) is necessary for the translational pausing of its own mRNA.

Belongs to the bZIP family. As to quaternary structure, isoform 1 interacts with HM13. Isoform 1 interacts with RNF139; the interaction induces ubiquitination and degradation of isoform 1. Isoform 1 interacts (via luminal domain) with DERL1; the interaction obviates the need for ectodomain shedding prior HM13/SPP-mediated XBP1 isoform 1 cleavage. Isoform 1 interacts with isoform 2; the interaction sequesters isoform 2 from the nucleus and enhances isoform 2 degradation in the cytoplasm. Isoform 1 interacts with HDAC3 and AKT1; the interactions occur in endothelial cell (EC) under disturbed flow. Isoform 1 interacts with the oncoprotein FOS. Isoform 2 interacts with ATF6; the interaction occurs in a ER stress-dependent manner and is required for DNA binding to the unfolded protein response element (UPRE). Isoform 2 interacts with PIK3R1; the interaction is direct and induces translocation of XBP1 isoform 2 into the nucleus and the unfolded protein response (UPR) XBP1-dependent target genes activation in a ER stress- and/or insulin-dependent but PI3K-independent manner. Isoform 2 interacts with SIRT1. Isoform 2 interacts with PIK3R1 and PIK3R2; the interactions are direct and induce translocation of XBP1 isoform 2 into the nucleus and the unfolded protein response (UPR) XBP1-dependent target genes activation in a ER stress- and/or insulin-dependent but PI3K-independent manner. Isoform 2 interacts with FOXO1; the interaction is direct and leads to FOXO1 ubiquitination and degradation via the proteasome pathway in hepatocytes. Post-translationally, acetylated by EP300; acetylation positively regulates the transcriptional activity of XBP1 isoform 2. Isoform 2 is deacetylated by SIRT1; deacetylation negatively regulates the transcriptional activity of XBP1 isoform 2. Ubiquitinated, leading to proteasomal degradation in response to ER stress. In terms of processing, X-box-binding protein 1, cytoplasmic form and luminal form are produced by intramembrane proteolytic cleavage of ER membrane-anchored isoform 1 triggered by HM13/SPP in a DERL1-RNF139-dependent and VCP/p97-independent manner. X-box-binding protein 1, luminal form is ubiquitinated leading to proteasomal degradation. Isoform 1 and isoform 2 are expressed at higher level in branch curves of vessel walls and in atherosclerotic plaques relative to healthy segments of the same aortas (at protein level). Expressed in skeletal muscles, plasma cells and pancreatic beta cells. Isoform 1 and isoform 2 are expressed in gonadal adipose tissue. Isoform 1 is expressed in inguinal adipose tissue.

It localises to the endoplasmic reticulum. The protein resides in the nucleus. The protein localises to the cytoplasm. It is found in the endoplasmic reticulum membrane. Its subcellular location is the membrane. Its function is as follows. Functions as a transcription factor during endoplasmic reticulum stress by regulating the unfolded protein response (UPR). Required for cardiac myogenesis and hepatogenesis during embryonic development and the development of secretory tissues such as exocrine pancreas and salivary gland. Involved in differentiation of B lymphocytes to plasma cells and production of immunoglobulins. Modulates the cellular response to ER stress in a PIK3R-dependent manner. Binds to the cis-acting X box present in the promoter regions of major histocompatibility complex class II genes. Involved in VEGF-induced endothelial cell (EC) proliferation and retinal blood vessel formation during embryonic development but also for angiogenesis in adult tissues under ischemic conditions. Also functions as a major regulator of the UPR in obesity-induced insulin resistance and type 2 diabetes for the management of obesity and diabetes prevention. In terms of biological role, plays a role in the unconventional cytoplasmic splicing processing of its own mRNA triggered by the endoplasmic reticulum (ER) transmembrane endoribonuclease ERN1: upon ER stress, the emerging XBP1 polypeptide chain, as part of a mRNA-ribosome-nascent chain (R-RNC) complex, cotranslationally recruits its own unprocessed mRNA through transient docking to the ER membrane and translational pausing, therefore facilitating efficient IRE1-mediated XBP1 mRNA isoform 2 production. In endothelial cells (EC), associated with KDR, promotes IRE1-mediated XBP1 mRNA isoform 2 production in a vascular endothelial growth factor (VEGF)-dependent manner, leading to EC proliferation and angiogenesis. Functions as a negative feed-back regulator of the potent transcription factor XBP1 isoform 2 protein levels through proteasome-mediated degradation, thus preventing the constitutive activation of the ER stress response signaling pathway. Inhibits the transactivation activity of XBP1 isoform 2 in myeloma cells. Acts as a weak transcriptional factor. Together with HDAC3, contributes to the activation of NFE2L2-mediated HMOX1 transcription factor gene expression in a PI(3)K/mTORC2/Akt-dependent signaling pathway leading to EC survival under disturbed flow/oxidative stress. Binds to the ER stress response element (ERSE) upon ER stress. Binds to the consensus 5'-GATGACGTG[TG]N(3)[AT]T-3' sequence related to cAMP responsive element (CRE)-like sequences. Binds the Tax-responsive element (TRE) present in the long terminal repeat (LTR) of T-cell leukemia virus type 1 (HTLV-I) and to the TPA response elements (TRE). Associates preferentially to the HDAC3 gene promoter region in a static flow-dependent manner. Binds to the CDH5/VE-cadherin gene promoter region. Functionally, functions as a stress-inducible potent transcriptional activator during endoplasmic reticulum (ER) stress by inducing unfolded protein response (UPR) target genes via binding to the UPR element (UPRE). Up-regulates target genes encoding ER chaperones and ER-associated degradation (ERAD) components to enhance the capacity of productive folding and degradation mechanism, respectively, in order to maintain the homeostasis of the ER under ER stress. Plays a role in the production of immunoglobulins and interleukin-6 in the presence of stimuli required for plasma cell differentiation, and promotes as well membrane phospholipid biosynthesis necessary for ER expansion. Contributes to the VEGF-induced endothelial cell (EC) growth and proliferation in a Akt/GSK-dependent and/or -independent signaling pathway, respectively, leading to beta-catenin nuclear translocation and E2F2 gene expression. Promotes umbilical vein EC apoptosis and atherosclerotisis development in a caspase-dependent signaling pathway, and contributes to VEGF-induced EC proliferation and angiogenesis in adult tissues under ischemic conditions. Involved in the regulation of endostatin-induced autophagy in EC through BECN1 transcriptional activation. Plays a role as an oncogene by promoting tumor progression: stimulates zinc finger protein SNAI1 transcription to induce epithelial-to-mesenchymal (EMT) transition, cell migration and invasion of breast cancer cells. Involved in adipocyte differentiation by regulating lipogenic gene expression during lactation. Plays a role in the survival of both dopaminergic neurons of the substantia nigra pars compacta (SNpc), by maintaining protein homeostasis and of myeloma cells. Increases insulin sensitivity in the liver as a response to a high carbohydrate diet, resulting in improved glucose tolerance. Also improves glucose homeostasis in an ER stress- and/or insulin-independent manner through both binding and proteasome-induced degradation of the transcription factor FOXO1, hence resulting in suppression of gluconeogenic genes expression and in a reduction of blood glucose levels. Controls the induction of de novo fatty acid synthesis in hepatocytes by regulating the expression of a subset of lipogenic genes in an ER stress- and UPR-independent manner. Binds to the 5'-CCACG-3' motif in the PPARG promoter. Associates preferentially to the HDAC3 gene promoter region in a disturbed flow-dependent manner. Binds to the BECN1 gene promoter region. Binds to the CDH5/VE-cadherin gene promoter region. Binds to the ER stress response element (ERSE) upon ER stress. This Mus musculus (Mouse) protein is X-box-binding protein 1.